An 87-amino-acid chain; its full sequence is Small ribosomal subunit protein uS17 (87 aa).

The protein belongs to the universal ribosomal protein uS17 family. Part of the 30S ribosomal subunit.

Functionally, one of the primary rRNA binding proteins, it binds specifically to the 5'-end of 16S ribosomal RNA. In Geobacillus kaustophilus (strain HTA426), this protein is Small ribosomal subunit protein uS17.